Reading from the N-terminus, the 220-residue chain is Large ribosomal subunit protein bL25 (220 aa).

This sequence belongs to the bacterial ribosomal protein bL25 family. CTC subfamily. In terms of assembly, part of the 50S ribosomal subunit; part of the 5S rRNA/L5/L18/L25 subcomplex. Contacts the 5S rRNA. Binds to the 5S rRNA independently of L5 and L18.

Functionally, this is one of the proteins that binds to the 5S RNA in the ribosome where it forms part of the central protuberance. This Zymomonas mobilis subsp. mobilis (strain ATCC 31821 / ZM4 / CP4) protein is Large ribosomal subunit protein bL25.